We begin with the raw amino-acid sequence, 200 residues long: Gene 55 protein (200 aa).

Cys8 carries S-palmitoyl cysteine; by host lipidation.

Belongs to the herpesviridae UL51 family. In terms of assembly, oligomerizes. Interacts with ORF42; this interaction mediates ORF42 incorporation to virions. Phosphorylated. In terms of processing, palmitoylation is necessary for Golgi localization.

It is found in the virion tegument. The protein localises to the host cytoplasm. Its subcellular location is the host Golgi apparatus. In terms of biological role, plays several roles during the time course of infection, including egress of virus particles from the perinuclear space and secondary envelopment of cytoplasmic capsids that bud into specific trans-Golgi network (TGN)-derived membranes. The sequence is that of Gene 55 protein (55) from Saimiriine herpesvirus 2 (strain 11) (SaHV-2).